A 301-amino-acid chain; its full sequence is Thymidylate synthase (301 aa).

DUMP is bound by residues R38 and 163–164; that span reads RR. C183 functions as the Nucleophile in the catalytic mechanism. DUMP is bound by residues 203-206, N214, and 244-246; these read RSGD and HIY. Residue D206 coordinates (6R)-5,10-methylene-5,6,7,8-tetrahydrofolate. A (6R)-5,10-methylene-5,6,7,8-tetrahydrofolate-binding site is contributed by A300.

It belongs to the thymidylate synthase family. Homodimer.

It carries out the reaction dUMP + (6R)-5,10-methylene-5,6,7,8-tetrahydrofolate = 7,8-dihydrofolate + dTMP. It functions in the pathway pyrimidine metabolism; dTTP biosynthesis. In terms of biological role, catalyzes the reductive methylation of deoxyuridylate to thymidylate. The chain is Thymidylate synthase from Varicella-zoster virus (strain Dumas) (HHV-3).